A 91-amino-acid chain; its full sequence is Small ribosomal subunit protein uS15c (91 aa).

This sequence belongs to the universal ribosomal protein uS15 family. As to quaternary structure, part of the 30S ribosomal subunit.

It is found in the plastid. The protein localises to the chloroplast. The polypeptide is Small ribosomal subunit protein uS15c (rps15) (Phalaenopsis aphrodite subsp. formosana (Moth orchid)).